The primary structure comprises 2473 residues: Neurogenic locus notch homolog protein 2 (2473 aa).

Residues 1–25 (MPALRPAALRALLWLWLCGAGPAHA) form the signal peptide. EGF-like domains are found at residues 26–63 (LQCRGGQEPCVNEGTCVTYHNGTGFCRCPEGFLGEYCQ), 64–102 (HRDPCEKNRCQNGGTCVPQGMLGKATCRCAPGFTGEDCQ), 105–143 (TSHPCFVSRPCQNGGTCHMLSRDTYECTCQVGFTGKQCQ), and 144–180 (WTDACLSHPCENGSTCTSVASQFSCKCPAGLTGQKCE). The Extracellular segment spans residues 26 to 1679 (LQCRGGQEPC…SELESPRNAQ (1654 aa)). Cystine bridges form between cysteine 28/cysteine 41, cysteine 35/cysteine 51, cysteine 53/cysteine 62, cysteine 68/cysteine 79, cysteine 73/cysteine 90, cysteine 92/cysteine 101, cysteine 109/cysteine 121, cysteine 115/cysteine 131, cysteine 133/cysteine 142, cysteine 148/cysteine 159, cysteine 153/cysteine 168, cysteine 170/cysteine 179, cysteine 186/cysteine 198, cysteine 192/cysteine 207, cysteine 209/cysteine 218, cysteine 230/cysteine 246, cysteine 248/cysteine 257, cysteine 264/cysteine 275, cysteine 269/cysteine 284, cysteine 286/cysteine 295, cysteine 302/cysteine 315, cysteine 309/cysteine 324, cysteine 326/cysteine 335, cysteine 342/cysteine 353, cysteine 347/cysteine 362, cysteine 364/cysteine 373, cysteine 379/cysteine 390, cysteine 384/cysteine 401, cysteine 403/cysteine 412, cysteine 419/cysteine 433, cysteine 427/cysteine 442, cysteine 444/cysteine 453, cysteine 460/cysteine 471, cysteine 465/cysteine 480, cysteine 482/cysteine 491, cysteine 498/cysteine 509, cysteine 503/cysteine 518, cysteine 520/cysteine 529, cysteine 536/cysteine 547, cysteine 541/cysteine 556, cysteine 558/cysteine 567, cysteine 574/cysteine 584, cysteine 579/cysteine 593, cysteine 595/cysteine 604, cysteine 611/cysteine 622, cysteine 616/cysteine 631, cysteine 633/cysteine 642, cysteine 649/cysteine 659, cysteine 654/cysteine 668, cysteine 670/cysteine 679, cysteine 686/cysteine 697, cysteine 691/cysteine 706, cysteine 708/cysteine 717, cysteine 724/cysteine 734, cysteine 729/cysteine 743, cysteine 745/cysteine 754, cysteine 761/cysteine 772, cysteine 766/cysteine 781, cysteine 783/cysteine 792, cysteine 799/cysteine 810, cysteine 804/cysteine 819, cysteine 821/cysteine 830, cysteine 837/cysteine 848, cysteine 842/cysteine 859, cysteine 861/cysteine 870, cysteine 877/cysteine 888, cysteine 882/cysteine 897, cysteine 899/cysteine 908, cysteine 915/cysteine 926, cysteine 920/cysteine 935, cysteine 937/cysteine 946, cysteine 953/cysteine 964, cysteine 958/cysteine 973, cysteine 975/cysteine 984, cysteine 991/cysteine 1002, cysteine 996/cysteine 1011, cysteine 1013/cysteine 1022, cysteine 1029/cysteine 1040, cysteine 1034/cysteine 1049, cysteine 1051/cysteine 1060, cysteine 1067/cysteine 1078, cysteine 1072/cysteine 1087, and cysteine 1089/cysteine 1098. N-linked (GlcNAc...) asparagine glycosylation occurs at asparagine 46. N-linked (GlcNAc...) asparagine glycosylation occurs at asparagine 155. The region spanning 182–219 (DINECDIPGRCQHGGTCLNLPGSYRCQCPQGFTGQHCD) is the EGF-like 5; calcium-binding domain. The 38-residue stretch at 221 to 258 (PYVPCAPSPCVNGGTCRQTGDFTFECNCLPGFEGSTCE) folds into the EGF-like 6; incomplete domain. An EGF-like 7; calcium-binding domain is found at 260–296 (NIDDCPNHKCQNGGVCVDGVNTYNCRCPPQWTGQFCT). Residues 298 to 336 (DVDECLLQPNACQNGGTCTNRNGGYGCVCVNGWSGDDCS) enclose the EGF-like 8; calcium-binding domain. The region spanning 338 to 374 (NIDDCAYASCTPGSTCIDRVASFSCLCPEGKAGLLCH) is the EGF-like 9; calcium-binding domain. The region spanning 375 to 413 (LDDACISNPCHKGALCDTNPLNGQYICTCPQGYKGADCT) is the EGF-like 10 domain. In terms of domain architecture, EGF-like 11; calcium-binding spans 415–454 (DVDECAMANSNPCEHAGKCVNTDGAFHCECLKGYAGPRCE). Residues 456–492 (DINECHSDPCQNDATCLDKIGGFTCLCMPGFKGVHCE) enclose the EGF-like 12; calcium-binding domain. Residues 494–530 (EVNECQSNPCVNNGQCVDKVNRFQCLCPPGFTGPVCQ) enclose the EGF-like 13; calcium-binding domain. The 37-residue stretch at 532–568 (DIDDCSSTPCLNGAKCIDHPNGYECQCATGFTGILCD) folds into the EGF-like 14; calcium-binding domain. Positions 570–605 (NIDNCDPDPCHHGQCQDGIDSYTCICNPGYMGAICS) constitute an EGF-like 15; calcium-binding domain. Residues 607–643 (QIDECYSSPCLNDGRCIDLVNGYQCNCQPGTSGLNCE) form the EGF-like 16; calcium-binding domain. Serine 613 carries an O-linked (Glc...) serine; alternate glycan. Residue serine 613 is glycosylated (O-linked (Xyl...) serine; alternate). The 36-residue stretch at 645–680 (NFDDCASNPCMHGVCVDGINRYSCVCSPGFTGQRCN) folds into the EGF-like 17; calcium-binding domain. Residues 682-718 (DIDECASNPCRKGATCINDVNGFRCICPEGPHHPSCY) enclose the EGF-like 18; calcium-binding domain. The EGF-like 19 domain maps to 720 to 755 (QVNECLSNPCIHGNCTGGLSGYKCLCDAGWVGVNCE). A glycan (N-linked (GlcNAc...) asparagine) is linked at asparagine 733. The region spanning 757-793 (DKNECLSNPCQNGGTCNNLVNGYRCTCKKGFKGYNCQ) is the EGF-like 20; calcium-binding domain. In terms of domain architecture, EGF-like 21; calcium-binding spans 795–831 (NIDECASNPCLNQGTCFDDVSGYTCHCMLPYTGKNCQ). Residues 833–871 (VLAPCSPNPCENAAVCKEAPNFESFSCLCAPGWQGKRCT) form the EGF-like 22 domain. In terms of domain architecture, EGF-like 23; calcium-binding spans 873-909 (DVDECISKPCMNNGVCHNTQGSYVCECPPGFSGMDCE). One can recognise an EGF-like 24; calcium-binding domain in the interval 911-947 (DINDCLANPCQNGGSCVDHVNTFSCQCHPGFIGDKCQ). The EGF-like 25; calcium-binding domain occupies 949-985 (DMNECLSEPCKNGGTCSDYVNSYTCTCPAGFHGVHCE). Positions 987 to 1023 (NIDECTESSCFNGGTCVDGINSFSCLCPVGFTGPFCL) constitute an EGF-like 26; calcium-binding domain. Positions 1025–1061 (DINECSSNPCLNAGTCVDGLGTYRCICPLGYTGKNCQ) constitute an EGF-like 27; calcium-binding domain. EGF-like domains are found at residues 1063-1099 (LVNLCSRSPCKNKGTCVQEKARPHCLCPPGWDGAYCD) and 1101-1147 (LNVS…SYCE). An N-linked (GlcNAc...) asparagine glycan is attached at asparagine 1102. 24 disulfide bridges follow: cysteine 1105–cysteine 1126, cysteine 1120–cysteine 1135, cysteine 1137–cysteine 1146, cysteine 1153–cysteine 1164, cysteine 1158–cysteine 1173, cysteine 1175–cysteine 1184, cysteine 1191–cysteine 1202, cysteine 1196–cysteine 1211, cysteine 1213–cysteine 1222, cysteine 1229–cysteine 1241, cysteine 1235–cysteine 1250, cysteine 1252–cysteine 1261, cysteine 1268–cysteine 1281, cysteine 1273–cysteine 1290, cysteine 1292–cysteine 1301, cysteine 1308–cysteine 1319, cysteine 1313–cysteine 1331, cysteine 1333–cysteine 1346, cysteine 1378–cysteine 1389, cysteine 1383–cysteine 1400, cysteine 1402–cysteine 1411, cysteine 1425–cysteine 1448, cysteine 1430–cysteine 1443, and cysteine 1439–cysteine 1455. The 37-residue stretch at 1149 to 1185 (QLDECASNPCQHGATCNDFIGGYRCECVPGYQGVNCE) folds into the EGF-like 30; calcium-binding domain. The 37-residue stretch at 1187–1223 (EVDECQNQPCQNGGTCIDLVNHFKCSCPPGTRGLLCE) folds into the EGF-like 31; calcium-binding domain. One can recognise an EGF-like 32; calcium-binding domain in the interval 1225–1262 (NIDECAGGPHCLNGGQCVDRIGGYTCRCLPGFAGERCE). EGF-like domains lie at 1264-1302 (DINECLSNPCSSEGSLDCVQLKNNYNCICRSAFTGRHCE), 1304-1343 (FLDVCPQKPCLNGGTCAVASNMPDGFICRCPPGFSGARCQ), and 1375-1412 (ESGCASNPCQHGGTCYPQRQPPHYSCRCPPSFGGSHCE). 3 LNR repeats span residues 1425 to 1465 (CQSQ…PWAN), 1466 to 1502 (CTSTLRCWEYINNQCDEQCNTAECLFDNFECQRNSKT), and 1503 to 1544 (CKYD…NLAE). The interval 1425-1679 (CQSQYCADKA…SELESPRNAQ (255 aa)) is negative regulatory region (NRR). N-linked (GlcNAc...) asparagine glycosylation is present at asparagine 1465. 7 disulfides stabilise this stretch: cysteine 1466–cysteine 1489, cysteine 1472–cysteine 1484, cysteine 1480–cysteine 1496, cysteine 1503–cysteine 1527, cysteine 1509–cysteine 1522, cysteine 1518–cysteine 1534, and cysteine 1634–cysteine 1641. A helical membrane pass occupies residues 1680–1700 (LLYLLAVAVVIILFFILLGVI). The Cytoplasmic portion of the chain corresponds to 1701–2473 (MAKRKRKHGF…PPHSNMQVYA (773 aa)). Threonine 1718 carries the post-translational modification Phosphothreonine. Residues 1755-1778 (GTSEHWVDDEGPQPKKAKAEDEAL) form a disordered region. The residue at position 1780 (serine 1780) is a Phosphoserine. Threonine 1803 bears the Phosphothreonine mark. The residue at position 1805 (serine 1805) is a Phosphoserine. Threonine 1809 is modified (phosphothreonine). ANK repeat units follow at residues 1828–1872 (DGCT…SLQA), 1877–1906 (TGEMALHLAARYSRADAAKRLLDAGADANA), 1910–1940 (MGRCPLHAAVAADAQGVFQILIRNRVTDLDA), 1944–1973 (DGTTPLILAARLAVEGMVAELINCQADVNA), 1977–2006 (HGKSALHWAAAVNNVEATLLLLKNGANRDM), and 2010–2039 (KEETPLFLAAREGSYEAAKILLDHFANRDI). Serine 1843 and serine 1846 each carry phosphoserine. Serine 2071, serine 2079, and serine 2082 each carry phosphoserine. Position 2098 is a phosphothreonine (threonine 2098). 3 disordered regions span residues 2098 to 2117 (TPMGKKARRPNTKSTMPTSL), 2122 to 2169 (KEAK…TSSP), and 2382 to 2473 (VGKY…QVYA). Over residues 2099-2108 (PMGKKARRPN) the composition is skewed to basic residues. 2 stretches are compositionally biased toward polar residues: residues 2140-2151 (VQLSESSVTLSP) and 2390-2400 (SQHSYASSNAA). A compositionally biased stretch (low complexity) spans 2419-2446 (PSPESPDQWSSSSPHSASDWSDVTTSPT). A compositionally biased stretch (gly residues) spans 2447–2456 (PGGGGGGQRG).

The protein belongs to the NOTCH family. As to quaternary structure, heterodimer of a C-terminal fragment N(TM) and an N-terminal fragment N(EC) which are probably linked by disulfide bonds. Interacts with MAML1, MAML2 and MAML3 which act as transcriptional coactivators for NOTCH2. Interacts with RELA/p65. Interacts with HIF1AN. Interacts (via ANK repeats) with TCIM, the interaction inhibits the nuclear translocation of NOTCH2 N2ICD. Interacts with CUL1, RBX1, SKP1 and FBXW7 that are SCF(FBXW7) E3 ubiquitin-protein ligase complex components. Interacts with MINAR1; this interaction increases MINAR1 stability and function. Interacts with MDK; this interaction mediates a nuclear accumulation of NOTCH2 and therefore activation of NOTCH2 signaling leading to interaction between HES1 and STAT3. Interacts with MINAR2. Synthesized in the endoplasmic reticulum as an inactive form which is proteolytically cleaved by a furin-like convertase in the trans-Golgi network before it reaches the plasma membrane to yield an active, ligand-accessible form. Cleavage results in a C-terminal fragment N(TM) and a N-terminal fragment N(EC). Following ligand binding, it is cleaved by TNF-alpha converting enzyme (TACE) to yield a membrane-associated intermediate fragment called notch extracellular truncation (NEXT). This fragment is then cleaved by presenilin dependent gamma-secretase to release a notch-derived peptide containing the intracellular domain (NICD) from the membrane. In terms of processing, hydroxylated by HIF1AN. Post-translationally, can be either O-glucosylated or O-xylosylated at Ser-613 by POGLUT1. Phosphorylated by GSK3. GSK3-mediated phosphorylation is necessary for NOTCH2 recognition by FBXW7, ubiquitination and degradation via the ubiquitin proteasome pathway. As to expression, expressed in the brain, liver, kidney, neuroepithelia, somites, optic vesicles and branchial arches, but not heart.

It is found in the cell membrane. The protein resides in the nucleus. The protein localises to the cytoplasm. In terms of biological role, functions as a receptor for membrane-bound ligands Jagged-1 (JAG1), Jagged-2 (JAG2) and Delta-1 (DLL1) to regulate cell-fate determination. Upon ligand activation through the released notch intracellular domain (NICD) it forms a transcriptional activator complex with RBPJ/RBPSUH and activates genes of the enhancer of split locus. Affects the implementation of differentiation, proliferation and apoptotic programs. May play an essential role in postimplantation development, probably in some aspect of cell specification and/or differentiation. In collaboration with RELA/p65 enhances NFATc1 promoter activity and positively regulates RANKL-induced osteoclast differentiation. Positively regulates self-renewal of liver cancer cells. This is Neurogenic locus notch homolog protein 2 from Mus musculus (Mouse).